Here is a 605-residue protein sequence, read N- to C-terminus: Arginyl-tRNA--protein transferase 2 (605 aa).

The span at 496 to 513 (KVSSSSSSPQASETLLES) shows a compositional bias: low complexity. Positions 496–549 (KVSSSSSSPQASETLLESTSEHEDMEQGDTNDDDDEMYNSDEDSDSDSSSSRNR) are disordered. Acidic residues predominate over residues 518 to 541 (EDMEQGDTNDDDDEMYNSDEDSDS).

It belongs to the R-transferase family.

The enzyme catalyses an N-terminal L-alpha-aminoacyl-[protein] + L-arginyl-tRNA(Arg) = an N-terminal L-arginyl-L-aminoacyl-[protein] + tRNA(Arg) + H(+). Functionally, involved in the post-translational conjugation of arginine to the N-terminal aspartate or glutamate of a protein. This arginylation is required for degradation of the protein via the ubiquitin pathway. Component of the N-end rule pathway with ATE1 and PRT6. The N-end rule pathway regulates seed after-ripening, seedling sugar sensitivity, seedling lipid breakdown, and abscisic acid (ABA) sensitivity of germination. The end-rule pathway regulates various aspects of leaf and shoot development. Involved in the oxygen-dependent N-arginylation of RAP2-12, an activator of hypoxic gene expression. This N-terminal modification leads to ubiquitination by PRT6 and subsequent degradation of RAP2-12 under aerobic conditions. Involved in disease resistance. The end-rule pathway plays a role in regulating the timing and amplitude of the immune response following infection with the bacterial pathogen Pseudomonas syringae pv tomato. Regulates the biosynthesis of plant-defense metabolites such as glucosinolates, and the biosynthesis and response to the phytohormone jasmonate (JA), which plays a key role in plant immunity. This Arabidopsis thaliana (Mouse-ear cress) protein is Arginyl-tRNA--protein transferase 2.